The chain runs to 438 residues: uncharacterized protein (438 aa).

The region spanning 23–193 (IHAKPPVVVV…VNATIRLTAA (171 aa)) is the FAD-binding PCMH-type domain. Residues 55 to 59 (VRGSG), 60 to 61 (HS), Gln65, Asp117, Thr122, 128 to 132 (SVGGF), Ile183, Tyr393, and 430 to 433 (APGY) contribute to the FAD site. At His60 the chain carries Pros-8alpha-FAD histidine.

Belongs to the oxygen-dependent FAD-linked oxidoreductase family. FAD is required as a cofactor.

Functionally, the FAS-operon encodes genes involved in cytokinin production and in host plant fasciation (leafy gall). This is an uncharacterized protein from Rhodococcoides fascians (Rhodococcus fascians).